The primary structure comprises 462 residues: Putative endoglucanase type B (462 aa).

The N-terminal stretch at 1 to 16 (MAYKLILAAFAATALA) is a signal peptide. A CBM1 domain is found at 25-61 (CSNGVWAQCGGQNWSGTPCCTSGNKCVKLNDFYSQCQ). 2 disulfides stabilise this stretch: C33–C50 and C44–C60. Residue N37 is glycosylated (N-linked (GlcNAc...) asparagine). A compositionally biased stretch (low complexity) spans 64-100 (SAEPSSTAAGPSSTTATKTTATGGSSTTAGGSVTSAP). The disordered stretch occupies residues 64 to 102 (SAEPSSTAAGPSSTTATKTTATGGSSTTAGGSVTSAPPA). Residues 66 to 99 (EPSSTAAGPSSTTATKTTATGGSSTTAGGSVTSA) are linker. Residues 100–462 (PPAASDNPYA…LLDNANPSFL (363 aa)) form a catalytic region. The active site involves D190. C191 and C250 are disulfide-bonded. An N-linked (GlcNAc...) asparagine glycan is attached at N223. D236 acts as the Proton donor in catalysis. N272 and N317 each carry an N-linked (GlcNAc...) asparagine glycan. Cysteines 383 and 430 form a disulfide. The active-site Nucleophile is D416.

Belongs to the glycosyl hydrolase 6 (cellulase B) family.

The catalysed reaction is Endohydrolysis of (1-&gt;4)-beta-D-glucosidic linkages in cellulose, lichenin and cereal beta-D-glucans.. This is Putative endoglucanase type B from Fusarium oxysporum (Fusarium vascular wilt).